Reading from the N-terminus, the 531-residue chain is Transactivator/viroplasmin protein (531 aa).

Disordered regions lie at residues A80–G101 and C505–V531. Composition is skewed to polar residues over residues S91–T100 and C505–E517. Acidic residues predominate over residues G518–V531.

The protein belongs to the caulimoviridae viroplasmin family.

The protein resides in the host cytoplasm. Functionally, enhances the translation of downstream ORFs on polycistronic mRNAs. The protein is Transactivator/viroplasmin protein of Cestrum yellow leaf curling virus (CmYLCV).